The chain runs to 292 residues: MRIIKYLTILVISVVILTSCQSSSSQESTKSGEFRIVPTTVALTMTLDKLDLPIVGKPTSYKTLPNRYKDVPEIGQPMEPNVEAVKKLKPTHVLSVSTIKDEMQPFYKQLNMKGYFYDFDSLKGMQKSITQLGDQFNRKAQAKELNDHLNSVKQKIENKAVKQKKHPKVLILMGVPGSYLVATDKSYIGDLVKIAGGENVIKVKDRQYISSNTENLLNINPDIILRLPHGMPEEVKKMFQKEFKQNDIWKHFKAVKNNHVYDLEEVPFGITANVDADKAMTQLYDLFYKDKK.

The signal sequence occupies residues 1 to 19; that stretch reads MRIIKYLTILVISVVILTS. Cys-20 carries N-palmitoyl cysteine lipidation. Cys-20 carries the S-diacylglycerol cysteine lipid modification. Residues 35 to 291 form the Fe/B12 periplasmic-binding domain; that stretch reads RIVPTTVALT…QLYDLFYKDK (257 aa). Residues Val-41, Ala-42, Ser-60, Tyr-61, Met-78, and His-229 each contribute to the heme site.

Belongs to the bacterial solute-binding protein 8 family. Heme b is required as a cofactor.

It is found in the cell membrane. Involved in heme (porphyrin) scavenging. Binds Fe(2+) and Fe(3+) heme but the largest fraction is Fe(2+) heme. Functions as a high-affinity heme binding protein and probably has a role in relaying heme-iron from cell wall-anchored isd proteins receptors to the probable permease IsdF. The polypeptide is High-affinity heme uptake system protein IsdE (isdE) (Staphylococcus aureus (strain bovine RF122 / ET3-1)).